The primary structure comprises 258 residues: Imidazole glycerol phosphate synthase subunit HisF (258 aa).

Active-site residues include Asp11 and Asp130.

It belongs to the HisA/HisF family. As to quaternary structure, heterodimer of HisH and HisF.

The protein resides in the cytoplasm. It catalyses the reaction 5-[(5-phospho-1-deoxy-D-ribulos-1-ylimino)methylamino]-1-(5-phospho-beta-D-ribosyl)imidazole-4-carboxamide + L-glutamine = D-erythro-1-(imidazol-4-yl)glycerol 3-phosphate + 5-amino-1-(5-phospho-beta-D-ribosyl)imidazole-4-carboxamide + L-glutamate + H(+). It functions in the pathway amino-acid biosynthesis; L-histidine biosynthesis; L-histidine from 5-phospho-alpha-D-ribose 1-diphosphate: step 5/9. In terms of biological role, IGPS catalyzes the conversion of PRFAR and glutamine to IGP, AICAR and glutamate. The HisF subunit catalyzes the cyclization activity that produces IGP and AICAR from PRFAR using the ammonia provided by the HisH subunit. This is Imidazole glycerol phosphate synthase subunit HisF from Enterobacter sp. (strain 638).